Here is a 691-residue protein sequence, read N- to C-terminus: Elongation factor G 1 (691 aa).

The tr-type G domain maps to 8-282 (ERVRNIGIAA…AVVDYLPAPQ (275 aa)). GTP contacts are provided by residues 17–24 (AHIDAGKT), 81–85 (DTPGH), and 135–138 (NKMD).

It belongs to the TRAFAC class translation factor GTPase superfamily. Classic translation factor GTPase family. EF-G/EF-2 subfamily.

It localises to the cytoplasm. Functionally, catalyzes the GTP-dependent ribosomal translocation step during translation elongation. During this step, the ribosome changes from the pre-translocational (PRE) to the post-translocational (POST) state as the newly formed A-site-bound peptidyl-tRNA and P-site-bound deacylated tRNA move to the P and E sites, respectively. Catalyzes the coordinated movement of the two tRNA molecules, the mRNA and conformational changes in the ribosome. The polypeptide is Elongation factor G 1 (Trichodesmium erythraeum (strain IMS101)).